The following is a 453-amino-acid chain: Aldehyde dehydrogenase, dimeric NADP-preferring (453 aa).

S2 bears the N-acetylserine mark. K178 is modified (N6-acetyllysine). 188-193 lines the NAD(+) pocket; it reads GSTGVG. K194 is modified (N6-acetyllysine). Residues E210 and C244 contribute to the active site.

The protein belongs to the aldehyde dehydrogenase family. As to quaternary structure, homodimer. As to expression, high levels in stomach, esophagus and lung; low level in the liver and kidney.

The protein localises to the cytoplasm. It carries out the reaction an aldehyde + NAD(+) + H2O = a carboxylate + NADH + 2 H(+). The enzyme catalyses octanal + NAD(+) + H2O = octanoate + NADH + 2 H(+). Its function is as follows. ALDHs play a major role in the detoxification of alcohol-derived acetaldehyde. They are involved in the metabolism of corticosteroids, biogenic amines, neurotransmitters, and lipid peroxidation. Oxidizes medium and long chain aldehydes into non-toxic fatty acids. Preferentially oxidizes aromatic aldehyde substrates. Comprises about 50 percent of corneal epithelial soluble proteins. May play a role in preventing corneal damage caused by ultraviolet light. In Homo sapiens (Human), this protein is Aldehyde dehydrogenase, dimeric NADP-preferring (ALDH3A1).